The primary structure comprises 158 residues: UPF0098 protein YbhB (158 aa).

It belongs to the UPF0098 family. In terms of assembly, homodimer.

It localises to the cytoplasm. This is UPF0098 protein YbhB (ybhB) from Escherichia coli (strain K12).